The chain runs to 243 residues: Small ribosomal subunit protein uS3 (243 aa).

The region spanning 39–110 is the KH type-2 domain; the sequence is IRTFIEKKYG…QVRINVVEVE (72 aa). Residues 216–243 are disordered; the sequence is QTIPVGANPKRKASRRPQQFEDRSNENS. Over residues 233-243 the composition is skewed to basic and acidic residues; that stretch reads QQFEDRSNENS.

It belongs to the universal ribosomal protein uS3 family. As to quaternary structure, part of the 30S ribosomal subunit. Forms a tight complex with proteins S10 and S14.

In terms of biological role, binds the lower part of the 30S subunit head. Binds mRNA in the 70S ribosome, positioning it for translation. The chain is Small ribosomal subunit protein uS3 from Prochlorococcus marinus (strain MIT 9215).